We begin with the raw amino-acid sequence, 233 residues long: Type II methyltransferase M.MunI (233 aa).

Belongs to the MT-A70-like family.

The catalysed reaction is a 2'-deoxyadenosine in DNA + S-adenosyl-L-methionine = an N(6)-methyl-2'-deoxyadenosine in DNA + S-adenosyl-L-homocysteine + H(+). In terms of biological role, a methylase that recognizes the double-stranded sequence 5'-CAATTG-3', methylates A-3 on both strands, and protects the DNA from cleavage by the MunI endonuclease. The chain is Type II methyltransferase M.MunI from Mycoplasma sp.